A 370-amino-acid polypeptide reads, in one-letter code: MRIMSIMLHLLATILLSSAVSAQNANAASTRRLIGEDRESGRRWGVAATDLGIPYDQHNGEIGFLFGDTVSTKWVQEAKDLRSPVMLRSGIHPGEDGGIVFESAAGVDGDGLAPRLFYNGDRGDDGTGTGTWEFTVLPNDGISFPETGEHIISYLSIMNFTTPWTPNYSGLAYSTDGNTFTRLPTKWLNNDNNTDPFQMWTMQRDGDWVYVFTVRSAPQYGPLMLQRVPWDKMTNKTEYQGWGWNGEDWGWQRPCSPILDGYFGEPSVRRLHDGTWAMVYLNASTSTPHIVSRSAKDPTGPWSEEKVQVNQEGDGSLLYGGFIHPWSTSKGNQLYLMVSNWTSTSNLSQTTEAVADYEGTVSVSQFTGTL.

A signal peptide spans 1-22 (MRIMSIMLHLLATILLSSAVSA). Asn-159, Asn-167, Asn-192, Asn-235, Asn-282, Asn-340, and Asn-346 each carry an N-linked (GlcNAc...) asparagine glycan.

Its function is as follows. Part of the gene cluster that mediates the biosynthesis of notoamide, a fungal indole alkaloid that belongs to a family of natural products containing a characteristic bicyclo[2.2.2]diazaoctane core. The first step of notoamide biosynthesis involves coupling of L-proline and L-tryptophan by the bimodular NRPS notE, to produce cyclo-L-tryptophan-L-proline called brevianamide F. The reverse prenyltransferase notF then acts as a deoxybrevianamide E synthase and converts brevianamide F to deoxybrevianamide E via reverse prenylation at C-2 of the indole ring leading to the bicyclo[2.2.2]diazaoctane core. Deoxybrevianamide E is further hydroxylated at C-6 of the indole ring, likely catalyzed by the cytochrome P450 monooxygenase notG, to yield 6-hydroxy-deoxybrevianamide E. 6-hydroxy-deoxybrevianamide E is a specific substrate of the prenyltransferase notC for normal prenylation at C-7 to produce 6-hydroxy-7-prenyl-deoxybrevianamide, also called notoamide S. As the proposed pivotal branching point in notoamide biosynthesis, notoamide S can be diverted to notoamide E through an oxidative pyran ring closure putatively catalyzed by either notH cytochrome P450 monooxygenase or the notD FAD-linked oxidoreductase. This step would be followed by an indole 2,3-epoxidation-initiated pinacol-like rearrangement catalyzed by the notB FAD-dependent monooxygenase leading to the formation of notoamide C and notoamide D. On the other hand notoamide S is converted to notoamide T by notH (or notD), a bifunctional oxidase that also functions as the intramolecular Diels-Alderase responsible for generation of (+)-notoamide T. To generate antipodal (-)-notoaminide T, notH' (or notD') in Aspergillus versicolor is expected to catalyze a Diels-Alder reaction leading to the opposite stereochemistry. The remaining oxidoreductase notD (or notH) likely catalyzes the oxidative pyran ring formation to yield (+)-stephacidin A. The FAD-dependent monooxygenase notI is highly similar to notB and is predicted to catalyze a similar conversion from (+)-stephacidin A to (-)-notoamide B via the 2,3-epoxidation of (+)-stephacidin A followed by a pinacol-type rearrangement. Finally, it remains unclear which enzyme could be responsible for the final hydroxylation steps leading to notoamide A and sclerotiamide. The function of notJ in the notoamide biosynthesis has not been determined yet. This chain is Notoamide biosynthesis cluster protein J, found in Aspergillus sp. (strain MF297-2).